A 277-amino-acid polypeptide reads, in one-letter code: Carbonyl reductase [NADPH] 3 (277 aa).

An N-acetylserine modification is found at serine 2. Residues 10–34, 38–42, 63–64, and asparagine 90 each bind NADP(+); these read VTGANKGIGFAITRDLCRKFSGDVV, RDEAR, and DI. Serine 30 is subject to Phosphoserine. Serine 140 contributes to the substrate binding site. The active-site Proton acceptor is the tyrosine 194. 194–198 serves as a coordination point for NADP(+); the sequence is YGVSK.

It belongs to the short-chain dehydrogenases/reductases (SDR) family.

It localises to the cytoplasm. It catalyses the reaction a secondary alcohol + NADP(+) = a ketone + NADPH + H(+). The catalysed reaction is a quinone + NADPH + H(+) = a quinol + NADP(+). In terms of biological role, catalyzes the NADPH-dependent reduction of carbonyl compounds to their corresponding alcohols. Has low NADPH-dependent oxidoreductase activity. Acts on several orthoquinones, as well as on non-quinone compounds, such as isatin or on the anticancer drug oracin. Best substrates for CBR3 is 1,2- naphthoquinone, hence could play a role in protection against cytotoxicity of exogenous quinones. Exerts activity toward ortho-quinones but not paraquinones. No endogenous substrate for CBR3 except isatin has been identified. The chain is Carbonyl reductase [NADPH] 3 from Rattus norvegicus (Rat).